Here is a 625-residue protein sequence, read N- to C-terminus: Phosphomethylpyrimidine synthase (625 aa).

Residues asparagine 237, methionine 266, tyrosine 295, histidine 331, 351-353 (SRG), 392-395 (DGLR), and glutamate 431 each bind substrate. Histidine 435 serves as a coordination point for Zn(2+). Tyrosine 458 lines the substrate pocket. Histidine 499 provides a ligand contact to Zn(2+). Cysteine 579, cysteine 582, and cysteine 587 together coordinate [4Fe-4S] cluster.

Belongs to the ThiC family. As to quaternary structure, homodimer. It depends on [4Fe-4S] cluster as a cofactor.

The catalysed reaction is 5-amino-1-(5-phospho-beta-D-ribosyl)imidazole + S-adenosyl-L-methionine = 4-amino-2-methyl-5-(phosphooxymethyl)pyrimidine + CO + 5'-deoxyadenosine + formate + L-methionine + 3 H(+). The protein operates within cofactor biosynthesis; thiamine diphosphate biosynthesis. In terms of biological role, catalyzes the synthesis of the hydroxymethylpyrimidine phosphate (HMP-P) moiety of thiamine from aminoimidazole ribotide (AIR) in a radical S-adenosyl-L-methionine (SAM)-dependent reaction. The chain is Phosphomethylpyrimidine synthase from Cupriavidus metallidurans (strain ATCC 43123 / DSM 2839 / NBRC 102507 / CH34) (Ralstonia metallidurans).